The following is a 496-amino-acid chain: Anaerobic nitric oxide reductase flavorubredoxin (496 aa).

Positions 30–210 are zinc metallo-hydrolase; that stretch reads TKGTSYNSYL…PFSALVTAKI (181 aa). Fe cation-binding residues include His79, Glu81, Asp83, His147, Asp166, and His227. One can recognise a Flavodoxin-like domain in the interval 254-393; that stretch reads ITIFYDSMSN…LCREHGQFIA (140 aa). FMN-binding positions include 260–264 and 342–369; these read SMSNN and AFGS…ETAV. In terms of domain architecture, Rubredoxin-like spans 444–495; the sequence is KQCMLCSVCNWVYDPEIGEPNQGVEPNTPWSSVPNDFLCPECHLGKDVFVEI. Residues Cys449, Cys452, Cys482, and Cys485 each contribute to the Fe cation site.

The protein in the N-terminal section; belongs to the zinc metallo-hydrolase group 3 family. In terms of assembly, homotetramer. The cofactor is Fe cation. FMN serves as cofactor.

It is found in the cytoplasm. It participates in nitrogen metabolism; nitric oxide reduction. In terms of biological role, anaerobic nitric oxide reductase; uses NADH to detoxify nitric oxide (NO), protecting several 4Fe-4S NO-sensitive enzymes. Has at least 2 reductase partners, only one of which (NorW, flavorubredoxin reductase) has been identified. NO probably binds to the di-iron center; electrons enter from the NorW at rubredoxin and are transferred sequentially to the FMN center and the di-iron center. Also able to function as an aerobic oxygen reductase. The chain is Anaerobic nitric oxide reductase flavorubredoxin from Aliivibrio fischeri (strain ATCC 700601 / ES114) (Vibrio fischeri).